A 619-amino-acid polypeptide reads, in one-letter code: Zinc finger CCCH domain-containing protein 67 (619 aa).

2 ANK repeats span residues 52 to 81 (EPLT…LVDP) and 88 to 120 (SLST…DPAL). 2 C3H1-type zinc fingers span residues 213-241 (HYSC…HGVF) and 249-273 (QYRT…HTPD). The tract at residues 308 to 341 (SPGSSSFTPPLSPSAGGGGGGGGGSGGGGAWPQQ) is disordered. Gly residues predominate over residues 322–337 (AGGGGGGGGGSGGGGA).

The chain is Zinc finger CCCH domain-containing protein 67 from Oryza sativa subsp. japonica (Rice).